The sequence spans 379 residues: Homoserine O-acetyltransferase (379 aa).

An AB hydrolase-1 domain is found at 52 to 356; it reads NVVVVLHALT…VYGHDGFLVE (305 aa). The active-site Nucleophile is the S157. R227 is a binding site for substrate. Residues D320 and H350 contribute to the active site. Residue D351 participates in substrate binding.

It belongs to the AB hydrolase superfamily. MetX family. As to quaternary structure, homodimer.

Its subcellular location is the cytoplasm. The enzyme catalyses L-homoserine + acetyl-CoA = O-acetyl-L-homoserine + CoA. The protein operates within amino-acid biosynthesis; L-methionine biosynthesis via de novo pathway; O-acetyl-L-homoserine from L-homoserine: step 1/1. In terms of biological role, transfers an acetyl group from acetyl-CoA to L-homoserine, forming acetyl-L-homoserine. The chain is Homoserine O-acetyltransferase from Mycobacterium tuberculosis (strain CDC 1551 / Oshkosh).